A 431-amino-acid polypeptide reads, in one-letter code: STE20-related kinase adapter protein alpha (431 aa).

Ser2 and Ser46 each carry phosphoserine. Disordered regions lie at residues 32 to 52 and 314 to 344; these read EQPP…SIAS and PSRS…SHPY. One can recognise a Protein kinase domain in the interval 69–379; the sequence is YELLTIIGKG…ASTLLNHSFF (311 aa). Residue Thr419 is modified to Phosphothreonine; by LKB1.

The protein belongs to the protein kinase superfamily. STE Ser/Thr protein kinase family. STE20 subfamily. In terms of assembly, component of a trimeric complex composed of STK11/LKB1, STRAD (STRADA or STRADB) and CAB39/MO25 (CAB39/MO25alpha or CAB39L/MO25beta): the complex tethers STK11/LKB1 in the cytoplasm and stimulates its catalytic activity.

The protein resides in the nucleus. It is found in the cytoplasm. Pseudokinase which, in complex with CAB39/MO25 (CAB39/MO25alpha or CAB39L/MO25beta), binds to and activates STK11/LKB1. Adopts a closed conformation typical of active protein kinases and binds STK11/LKB1 as a pseudosubstrate, promoting conformational change of STK11/LKB1 in an active conformation. This chain is STE20-related kinase adapter protein alpha (Strada), found in Mus musculus (Mouse).